A 586-amino-acid chain; its full sequence is Aspartate--tRNA(Asp/Asn) ligase (586 aa).

Glutamate 172 is a binding site for L-aspartate. The interval 196 to 199 (QLYK) is aspartate. Arginine 218 serves as a coordination point for L-aspartate. Residues 218–220 (RDE) and glutamine 227 contribute to the ATP site. An L-aspartate-binding site is contributed by histidine 446. Glutamate 480 contributes to the ATP binding site. Arginine 487 serves as a coordination point for L-aspartate. An ATP-binding site is contributed by 532–535 (GIDR).

This sequence belongs to the class-II aminoacyl-tRNA synthetase family. Type 1 subfamily. Homodimer.

It localises to the cytoplasm. The catalysed reaction is tRNA(Asx) + L-aspartate + ATP = L-aspartyl-tRNA(Asx) + AMP + diphosphate. Functionally, aspartyl-tRNA synthetase with relaxed tRNA specificity since it is able to aspartylate not only its cognate tRNA(Asp) but also tRNA(Asn). Reaction proceeds in two steps: L-aspartate is first activated by ATP to form Asp-AMP and then transferred to the acceptor end of tRNA(Asp/Asn). This chain is Aspartate--tRNA(Asp/Asn) ligase, found in Borrelia garinii subsp. bavariensis (strain ATCC BAA-2496 / DSM 23469 / PBi) (Borreliella bavariensis).